The chain runs to 75 residues: UPF0270 protein PFL_4336 (75 aa).

Belongs to the UPF0270 family.

The sequence is that of UPF0270 protein PFL_4336 from Pseudomonas fluorescens (strain ATCC BAA-477 / NRRL B-23932 / Pf-5).